The following is a 106-amino-acid chain: Tripartite terminase subunit 2 (106 aa).

Belongs to the herpesviridae TRM2 protein family. In terms of assembly, associates with TRM1 and TRM3 to form the tripartite terminase complex.

It localises to the host nucleus. Component of the molecular motor that translocates viral genomic DNA in empty capsid during DNA packaging. Forms a tripartite terminase complex together with TRM1 and TRM3 in the host cytoplasm. Once the complex reaches the host nucleus, it interacts with the capsid portal vertex. This portal forms a ring in which genomic DNA is translocated into the capsid. In Human herpesvirus 6A (strain Uganda-1102) (HHV-6 variant A), this protein is Tripartite terminase subunit 2.